A 256-amino-acid polypeptide reads, in one-letter code: Pimeloyl-[acyl-carrier protein] methyl ester esterase (256 aa).

Positions 15–242 (HLVLLHGWGL…AAHAPFISHP (228 aa)) constitute an AB hydrolase-1 domain. Substrate-binding positions include W22, 82–83 (SL), and 143–147 (FLALQ). S82 serves as the catalytic Nucleophile. Catalysis depends on residues D207 and H235. Substrate is bound at residue H235.

This sequence belongs to the AB hydrolase superfamily. Carboxylesterase BioH family. Monomer.

Its subcellular location is the cytoplasm. It carries out the reaction 6-carboxyhexanoyl-[ACP] methyl ester + H2O = 6-carboxyhexanoyl-[ACP] + methanol + H(+). It functions in the pathway cofactor biosynthesis; biotin biosynthesis. Its function is as follows. The physiological role of BioH is to remove the methyl group introduced by BioC when the pimeloyl moiety is complete. It allows to synthesize pimeloyl-ACP via the fatty acid synthetic pathway through the hydrolysis of the ester bonds of pimeloyl-ACP esters. The polypeptide is Pimeloyl-[acyl-carrier protein] methyl ester esterase (Shigella dysenteriae serotype 1 (strain Sd197)).